Consider the following 187-residue polypeptide: Virulence protein ATR13 (187 aa).

Residues 1-19 (MRLVHAVLLPGIIVFVSNG) form the signal peptide. The RxLR motif lies at 38–41 (RQLR). The tract at residues 50–92 (LSRASFGLGKAQDPLDKFFRKIINSRKPIETSYSAKGIHEKII) is leucine heptad repeat region. A run of 4 repeats spans residues 93–103 (KAYDRHVFESK), 104–114 (KAHDRHVSKSK), 115–125 (KAHGRHVSKSK), and 126–136 (MAHDRHVSKSE). The segment at 93–136 (KAYDRHVFESKKAHDRHVSKSKKAHGRHVSKSKMAHDRHVSKSE) is 4 X 11 AA tandem repeats. A disordered region spans residues 104–136 (KAHDRHVSKSKKAHGRHVSKSKMAHDRHVSKSE). Basic residues predominate over residues 111 to 125 (SKSKKAHGRHVSKSK). Basic and acidic residues predominate over residues 126–136 (MAHDRHVSKSE). The segment at 137 to 187 (KAPIQYASVADYLKKIYPGTDIERIVSTLKRHDEVGAKDLGAKLQTAVASQ) is highly variable C-terminus domain.

This sequence belongs to the RxLR effector family.

The protein localises to the secreted. It localises to the host nucleus. It is found in the host nucleolus. The protein resides in the host cytoplasm. Functionally, secreted effector that acts as an elicitor of hypersensitive response (HR) specifically on plants carrying defense protein RPP13. Recognition of ATR13 by RPP13 initiates defense responses that are effective against oomycete, bacterial and viral pathogens. Due to high polymorphism, ATR13-Emoy2 does not recognize RPP13-Nd, the RPP13 defense protein from Arabidopsis thaliana ecotype Niederzenz. ATR13-Emoy2 is recognized by RPP13 variants RPP13-UKID44, RPP13-UKID65 and RPP13-UKID71. This Hyaloperonospora arabidopsidis (strain Emoy2) (Downy mildew agent) protein is Virulence protein ATR13.